The sequence spans 623 residues: Glutathione import ATP-binding protein GsiA (623 aa).

ABC transporter domains are found at residues 18 to 272 (VRNL…QGLL) and 317 to 567 (LQVS…RKLM). Residues 52–59 (GESGSGKS) and 360–367 (GESGCGKS) each bind ATP.

It belongs to the ABC transporter superfamily. Glutathione importer (TC 3.A.1.5.11) family. As to quaternary structure, the complex is composed of two ATP-binding proteins (GsiA), two transmembrane proteins (GsiC and GsiD) and a solute-binding protein (GsiB).

Its subcellular location is the cell inner membrane. It catalyses the reaction glutathione(out) + ATP + H2O = glutathione(in) + ADP + phosphate + H(+). Its function is as follows. Part of the ABC transporter complex GsiABCD involved in glutathione import. Responsible for energy coupling to the transport system. The sequence is that of Glutathione import ATP-binding protein GsiA from Pectobacterium atrosepticum (strain SCRI 1043 / ATCC BAA-672) (Erwinia carotovora subsp. atroseptica).